A 330-amino-acid chain; its full sequence is Aspartate--ammonia ligase (330 aa).

The protein belongs to the class-II aminoacyl-tRNA synthetase family. AsnA subfamily.

The protein localises to the cytoplasm. It catalyses the reaction L-aspartate + NH4(+) + ATP = L-asparagine + AMP + diphosphate + H(+). It functions in the pathway amino-acid biosynthesis; L-asparagine biosynthesis; L-asparagine from L-aspartate (ammonia route): step 1/1. This Streptococcus thermophilus (strain CNRZ 1066) protein is Aspartate--ammonia ligase.